A 208-amino-acid polypeptide reads, in one-letter code: Fibroblast growth factor 6 (208 aa).

Positions 1 to 37 (MALGQRLFITMSRGAGRVQGTLQALVFLGVLVGMVVP) are cleaved as a signal peptide. An N-linked (GlcNAc...) asparagine glycan is attached at Asn-45. Cys-90 and Cys-157 are joined by a disulfide.

This sequence belongs to the heparin-binding growth factors family. Interacts with FGFR1, FGFR2 and FGFR4. Affinity between fibroblast growth factors (FGFs) and their receptors is increased by heparan sulfate glycosaminoglycans that function as coreceptors. Embryos, adult muscles and adult testis.

The protein localises to the secreted. It is found in the extracellular space. Plays an important role in the regulation of cell proliferation, cell differentiation, angiogenesis and myogenesis, and is required for normal muscle regeneration. This is Fibroblast growth factor 6 (Fgf6) from Mus musculus (Mouse).